The following is a 69-amino-acid chain: Sperm protamine P1 (69 aa).

The interval 1 to 69 is disordered; that stretch reads MASYRNSRSR…RKRNNNTENK (69 aa). Composition is skewed to basic residues over residues 7-25 and 34-63; these read SRSR…RSRV and RSSR…RKRN.

It belongs to the protamine P1 family. Testis.

It localises to the nucleus. The protein resides in the chromosome. Protamines substitute for histones in the chromatin of sperm during the haploid phase of spermatogenesis. They compact sperm DNA into a highly condensed, stable and inactive complex. This is Sperm protamine P1 (PRM1) from Perameles gunnii (Eastern barred bandicoot).